The following is a 218-amino-acid chain: Oxidoreductase claN (218 aa).

Positions 38, 57, and 82 each coordinate NADP(+). Residue serine 134 is the Proton donor of the active site. NADP(+) contacts are provided by tyrosine 148, lysine 152, and threonine 183. The active-site Proton acceptor is the tyrosine 148. Lysine 152 acts as the Lowers pKa of active site Tyr in catalysis.

It belongs to the short-chain dehydrogenases/reductases (SDR) family.

The protein operates within pigment biosynthesis. Functionally, oxidoreductase; part of the gene cluster that mediates the biosynthesis of the bianthraquinone cladofulvin, a conidial pigment not required for virulence but that plays a role in fitness and resistance to environmental stresses including UV light and low-temperature stress. The pathway begins with the synthesis of atrochrysone thioester by the polyketide synthase (PKS) claG. The atrochrysone carboxyl ACP thioesterase claF then breaks the thioester bond and releases the atrochrysone carboxylic acid from claG. This compound is decarboxylated by claH to yield emodin, which is further converted to chrysophanol hydroquinone by the reductase claC and the dehydratase claB. The cytochrome P450 monooxygenase claM then catalyzes the dimerization of nataloe-emodin to cladofulvin. In Passalora fulva (Tomato leaf mold), this protein is Oxidoreductase claN.